The primary structure comprises 191 residues: UPF0149 protein VS_2635 (191 aa).

Belongs to the UPF0149 family.

The polypeptide is UPF0149 protein VS_2635 (Vibrio atlanticus (strain LGP32) (Vibrio splendidus (strain Mel32))).